The primary structure comprises 788 residues: 5-methyltetrahydropteroyltriglutamate--homocysteine methyltransferase (788 aa).

5-methyltetrahydropteroyltri-L-glutamate contacts are provided by residues 24–27 (RELK) and Lys-140. L-homocysteine is bound by residues 463–465 (IGS) and Glu-516. Residues 463–465 (IGS) and Glu-516 contribute to the L-methionine site. 5-methyltetrahydropteroyltri-L-glutamate is bound by residues 547–548 (RC) and Trp-593. Residue Asp-631 participates in L-homocysteine binding. Asp-631 serves as a coordination point for L-methionine. Glu-637 provides a ligand contact to 5-methyltetrahydropteroyltri-L-glutamate. Positions 673, 675, and 697 each coordinate Zn(2+). Catalysis depends on His-726, which acts as the Proton donor. Cys-758 lines the Zn(2+) pocket.

The protein belongs to the vitamin-B12 independent methionine synthase family. Zn(2+) is required as a cofactor.

It carries out the reaction 5-methyltetrahydropteroyltri-L-glutamate + L-homocysteine = tetrahydropteroyltri-L-glutamate + L-methionine. It participates in amino-acid biosynthesis; L-methionine biosynthesis via de novo pathway; L-methionine from L-homocysteine (MetE route): step 1/1. Its function is as follows. Catalyzes the transfer of a methyl group from 5-methyltetrahydrofolate to homocysteine resulting in methionine formation. The sequence is that of 5-methyltetrahydropteroyltriglutamate--homocysteine methyltransferase from Rhodopseudomonas palustris (strain TIE-1).